Consider the following 212-residue polypeptide: Translation initiation factor IF-3 (212 aa).

The segment at 168–212 (MAPKAPASPKKDKADRPEGDAGDTDMAAPAPAPAAAPETESAPSA) is disordered. Basic and acidic residues predominate over residues 176-186 (PKKDKADRPEG). The span at 194-212 (AAPAPAPAAAPETESAPSA) shows a compositional bias: low complexity.

It belongs to the IF-3 family. Monomer.

The protein localises to the cytoplasm. IF-3 binds to the 30S ribosomal subunit and shifts the equilibrium between 70S ribosomes and their 50S and 30S subunits in favor of the free subunits, thus enhancing the availability of 30S subunits on which protein synthesis initiation begins. This Deinococcus radiodurans (strain ATCC 13939 / DSM 20539 / JCM 16871 / CCUG 27074 / LMG 4051 / NBRC 15346 / NCIMB 9279 / VKM B-1422 / R1) protein is Translation initiation factor IF-3.